A 114-amino-acid polypeptide reads, in one-letter code: Aspartate 1-decarboxylase (114 aa).

The active-site Schiff-base intermediate with substrate; via pyruvic acid is serine 25. Position 25 is a pyruvic acid (Ser) (serine 25). Threonine 57 is a substrate binding site. The active-site Proton donor is tyrosine 58. 73–75 provides a ligand contact to substrate; the sequence is GAA.

The protein belongs to the PanD family. In terms of assembly, heterooctamer of four alpha and four beta subunits. Pyruvate is required as a cofactor. In terms of processing, is synthesized initially as an inactive proenzyme, which is activated by self-cleavage at a specific serine bond to produce a beta-subunit with a hydroxyl group at its C-terminus and an alpha-subunit with a pyruvoyl group at its N-terminus.

It localises to the cytoplasm. The catalysed reaction is L-aspartate + H(+) = beta-alanine + CO2. It participates in cofactor biosynthesis; (R)-pantothenate biosynthesis; beta-alanine from L-aspartate: step 1/1. Catalyzes the pyruvoyl-dependent decarboxylation of aspartate to produce beta-alanine. The sequence is that of Aspartate 1-decarboxylase from Thermotoga petrophila (strain ATCC BAA-488 / DSM 13995 / JCM 10881 / RKU-1).